Reading from the N-terminus, the 147-residue chain is Phosphoribosyl-AMP cyclohydrolase (147 aa).

Mg(2+) is bound at residue Asp97. Cys98 is a Zn(2+) binding site. 2 residues coordinate Mg(2+): Asp99 and Asp101. Zn(2+) contacts are provided by Cys114 and Cys121.

It belongs to the PRA-CH family. Homodimer. It depends on Mg(2+) as a cofactor. Zn(2+) serves as cofactor.

The protein localises to the cytoplasm. The enzyme catalyses 1-(5-phospho-beta-D-ribosyl)-5'-AMP + H2O = 1-(5-phospho-beta-D-ribosyl)-5-[(5-phospho-beta-D-ribosylamino)methylideneamino]imidazole-4-carboxamide. It participates in amino-acid biosynthesis; L-histidine biosynthesis; L-histidine from 5-phospho-alpha-D-ribose 1-diphosphate: step 3/9. Functionally, catalyzes the hydrolysis of the adenine ring of phosphoribosyl-AMP. In Hydrogenovibrio crunogenus (strain DSM 25203 / XCL-2) (Thiomicrospira crunogena), this protein is Phosphoribosyl-AMP cyclohydrolase.